Consider the following 267-residue polypeptide: Imidazole glycerol phosphate synthase subunit HisF (267 aa).

Active-site residues include D22 and D141.

The protein belongs to the HisA/HisF family. Heterodimer of HisH and HisF.

It localises to the cytoplasm. The catalysed reaction is 5-[(5-phospho-1-deoxy-D-ribulos-1-ylimino)methylamino]-1-(5-phospho-beta-D-ribosyl)imidazole-4-carboxamide + L-glutamine = D-erythro-1-(imidazol-4-yl)glycerol 3-phosphate + 5-amino-1-(5-phospho-beta-D-ribosyl)imidazole-4-carboxamide + L-glutamate + H(+). It functions in the pathway amino-acid biosynthesis; L-histidine biosynthesis; L-histidine from 5-phospho-alpha-D-ribose 1-diphosphate: step 5/9. In terms of biological role, IGPS catalyzes the conversion of PRFAR and glutamine to IGP, AICAR and glutamate. The HisF subunit catalyzes the cyclization activity that produces IGP and AICAR from PRFAR using the ammonia provided by the HisH subunit. This chain is Imidazole glycerol phosphate synthase subunit HisF, found in Mycobacterium bovis (strain ATCC BAA-935 / AF2122/97).